Here is a 644-residue protein sequence, read N- to C-terminus: Pentatricopeptide repeat-containing protein At1g12775, mitochondrial (644 aa).

Residues 1–53 constitute a mitochondrion transit peptide; sequence MVRMMIRRLSSQASRFVQPRLLETGTLRIALINCPNELLFCCERGFSTFSDRN. PPR repeat units follow at residues 87–121, 122–156, 157–191, 192–226, 227–261, 262–296, 297–331, 332–366, 367–401, 402–436, 437–471, 472–506, 507–541, 542–576, and 577–611; these read TVID…GIAH, SIYT…GYEP, DTVI…GHKP, TLIT…GFQP, NEVT…NIKL, DAVK…GFKA, DIIT…KISP, NVVT…GIAP, NTIT…GCDP, DIMT…GVIA, NTVT…RVRP, DIVS…KMEL, DIGI…GVKL, DARA…GHAP, and DELT…GFPA.

It belongs to the PPR family. P subfamily.

It localises to the mitochondrion. The sequence is that of Pentatricopeptide repeat-containing protein At1g12775, mitochondrial from Arabidopsis thaliana (Mouse-ear cress).